The following is a 75-amino-acid chain: Small ribosomal subunit protein bS18c (75 aa).

The protein belongs to the bacterial ribosomal protein bS18 family. In terms of assembly, part of the 30S ribosomal subunit.

It is found in the plastid. It localises to the chloroplast. The sequence is that of Small ribosomal subunit protein bS18c from Angiopteris evecta (Mule's foot fern).